A 106-amino-acid chain; its full sequence is Immunoglobulin lambda constant 7 (106 aa).

The Ig-like domain occupies Pro-7 to Ala-101. Cys-28 and Cys-87 are oxidised to a cystine.

In terms of assembly, immunoglobulins are composed of two identical heavy chains and two identical light chains; disulfide-linked.

It is found in the secreted. It localises to the cell membrane. Functionally, constant region of immunoglobulin light chains. Immunoglobulins, also known as antibodies, are membrane-bound or secreted glycoproteins produced by B lymphocytes. In the recognition phase of humoral immunity, the membrane-bound immunoglobulins serve as receptors which, upon binding of a specific antigen, trigger the clonal expansion and differentiation of B lymphocytes into immunoglobulins-secreting plasma cells. Secreted immunoglobulins mediate the effector phase of humoral immunity, which results in the elimination of bound antigens. The antigen binding site is formed by the variable domain of one heavy chain, together with that of its associated light chain. Thus, each immunoglobulin has two antigen binding sites with remarkable affinity for a particular antigen. The variable domains are assembled by a process called V-(D)-J rearrangement and can then be subjected to somatic hypermutations which, after exposure to antigen and selection, allow affinity maturation for a particular antigen. The protein is Immunoglobulin lambda constant 7 of Homo sapiens (Human).